Here is a 1344-residue protein sequence, read N- to C-terminus: Protein stu1 (1344 aa).

Residues 93 to 131 (LYPLLVERLGDHKERIRAQAAQSFTDMWLAAPEEVEQCV) form an HEAT 1 repeat. Residues 265 to 292 (HRPVSRAETQASRSVSRLDTHQRPASRM) form a disordered region. An HEAT 2 repeat occupies 508–544 (VTFTTRILQHVSGACQDKNVQLRLFAAGWLKTLIQKQ). Disordered regions lie at residues 606-637 (RSLL…ANGT), 651-847 (AAQK…STPR), 914-945 (LTEN…ESVP), 984-1004 (PVTH…LSSS), and 1031-1054 (SLPH…PSQR). 2 stretches are compositionally biased toward polar residues: residues 691 to 705 (VRTV…SLSS) and 735 to 747 (ATDS…NQID). Low complexity predominate over residues 748–769 (GSPSAAKSKSSTPSLKSVSSTG). Polar residues-rich tracts occupy residues 828 to 847 (FSVT…STPR) and 914 to 942 (LTEN…NQDE). Positions 995–1004 (SSKPSGLSSS) are enriched in low complexity.

Belongs to the CLASP family. As to quaternary structure, interacts with microtubules.

It is found in the cytoplasm. Its subcellular location is the cytoskeleton. The protein resides in the nucleus. It localises to the spindle. Functionally, microtubule binding protein that promotes the stabilization of dynamic microtubules. Required for mitotic spindle formation. This Aspergillus fumigatus (strain ATCC MYA-4609 / CBS 101355 / FGSC A1100 / Af293) (Neosartorya fumigata) protein is Protein stu1 (stu1).